A 287-amino-acid polypeptide reads, in one-letter code: Inorganic pyrophosphatase (287 aa).

Arg-79 is a binding site for diphosphate. Residues Asp-116, Asp-121, and Asp-153 each contribute to the Mg(2+) site.

The protein belongs to the PPase family. It depends on Mg(2+) as a cofactor.

The protein localises to the cytoplasm. It carries out the reaction diphosphate + H2O = 2 phosphate + H(+). The polypeptide is Inorganic pyrophosphatase (IPP1) (Candida glabrata (strain ATCC 2001 / BCRC 20586 / JCM 3761 / NBRC 0622 / NRRL Y-65 / CBS 138) (Yeast)).